A 417-amino-acid chain; its full sequence is Gamma-glutamyl phosphate reductase (417 aa).

The protein belongs to the gamma-glutamyl phosphate reductase family.

Its subcellular location is the cytoplasm. The enzyme catalyses L-glutamate 5-semialdehyde + phosphate + NADP(+) = L-glutamyl 5-phosphate + NADPH + H(+). It functions in the pathway amino-acid biosynthesis; L-proline biosynthesis; L-glutamate 5-semialdehyde from L-glutamate: step 2/2. Catalyzes the NADPH-dependent reduction of L-glutamate 5-phosphate into L-glutamate 5-semialdehyde and phosphate. The product spontaneously undergoes cyclization to form 1-pyrroline-5-carboxylate. This is Gamma-glutamyl phosphate reductase from Escherichia coli (strain 55989 / EAEC).